Reading from the N-terminus, the 557-residue chain is Urocanate hydratase (557 aa).

NAD(+)-binding positions include G53 to G54, Q131, G177 to G179, E197, N243 to A244, Q264 to H268, Y274 to L275, and Y323. C411 is an active-site residue. G493 serves as a coordination point for NAD(+).

It belongs to the urocanase family. It depends on NAD(+) as a cofactor.

It localises to the cytoplasm. It catalyses the reaction 4-imidazolone-5-propanoate = trans-urocanate + H2O. Its pathway is amino-acid degradation; L-histidine degradation into L-glutamate; N-formimidoyl-L-glutamate from L-histidine: step 2/3. Catalyzes the conversion of urocanate to 4-imidazolone-5-propionate. The polypeptide is Urocanate hydratase (Mesorhizobium japonicum (strain LMG 29417 / CECT 9101 / MAFF 303099) (Mesorhizobium loti (strain MAFF 303099))).